A 273-amino-acid chain; its full sequence is Nucleotide-binding protein TT_C1664 (273 aa).

8 to 15 (GLSGAGKT) serves as a coordination point for ATP. Residue 57-60 (DARA) participates in GTP binding.

The protein belongs to the RapZ-like family.

In terms of biological role, displays ATPase and GTPase activities. This chain is Nucleotide-binding protein TT_C1664, found in Thermus thermophilus (strain ATCC BAA-163 / DSM 7039 / HB27).